We begin with the raw amino-acid sequence, 602 residues long: Alpha-glucosides permease MPH3 (602 aa).

Residues 1–106 (MKNLSFLINR…AAAWSLLVST (106 aa)) are Cytoplasmic-facing. The helical transmembrane segment at 107-127 (TLIMEGYDTAILGAFYALPIF) threads the bilayer. Residues 128–142 (QRKFGSQNDKTGEWE) are Extracellular-facing. A helical transmembrane segment spans residues 143 to 163 (ISASWQIGLTLCYMAGEIVGL). Topologically, residues 164 to 178 (QLTGPSVDLVGNRYT) are cytoplasmic. A helical membrane pass occupies residues 179-199 (LIIALFFLAAFTFILYFCNSL). Residue Gly200 is a topological domain, extracellular. A helical transmembrane segment spans residues 201 to 221 (MIAVGQALCGMPWGCFQCLTV). Residues 222-234 (SYASEICPLALRY) are Cytoplasmic-facing. Residues 235 to 255 (YLTTYSNLCWLFGQLFAAGIM) traverse the membrane as a helical segment. At 256–270 (KNSQKKYADSELGYK) the chain is on the extracellular side. Residues 271 to 291 (LPFALQWILPVPLALGIFFAP) traverse the membrane as a helical segment. Residues 292–363 (ESPWWLVKKG…EDKINRRRTR (72 aa)) lie on the Cytoplasmic side of the membrane. Residues 364–384 (ITCLCWAGQATCGSILIGYST) form a helical membrane-spanning segment. Residues 385 to 397 (YFYEKAGVSTEMS) lie on the Extracellular side of the membrane. Residues 398 to 418 (FTFSIIQYCLGICATFLSWWA) traverse the membrane as a helical segment. Residues 419-426 (SKYFGRYD) are Cytoplasmic-facing. A helical transmembrane segment spans residues 427–447 (LYAFGLAFQTIVFFIIGGLGC). At 448–459 (SSTHGSKMGSGS) the chain is on the extracellular side. The helical transmembrane segment at 460-480 (LLMAVAFFYNLGIAPVVFCLV) threads the bilayer. Topologically, residues 481–492 (SEMPSSRLRTKT) are cytoplasmic. Residues 493 to 513 (IILARNTYNVVSIICSVLILY) form a helical membrane-spanning segment. Residues 514–525 (QLNSKKWNWGAK) are Extracellular-facing. The chain crosses the membrane as a helical span at residues 526–546 (SGFFWGVLCFCTLIWAVVDLP). Residues 547–602 (ETAGKTFVEINELFKLGVSARKFKSTKVDPFVVKNPPKDVSHNDPKGDIEASIAEE) are Cytoplasmic-facing. The interval 580-602 (KNPPKDVSHNDPKGDIEASIAEE) is disordered. Positions 582–595 (PPKDVSHNDPKGDI) are enriched in basic and acidic residues.

The protein belongs to the major facilitator superfamily. Sugar transporter (TC 2.A.1.1) family.

It localises to the cell membrane. High-affinity uptake of maltose and maltotriose. Also transports alpha-methylglucoside, glucose and turanose but not melezitose or trehalose. This chain is Alpha-glucosides permease MPH3 (MPH3), found in Saccharomyces cerevisiae (strain AWRI1631) (Baker's yeast).